The primary structure comprises 236 residues: Phosphoribosylaminoimidazole-succinocarboxamide synthase (236 aa).

The protein belongs to the SAICAR synthetase family.

It carries out the reaction 5-amino-1-(5-phospho-D-ribosyl)imidazole-4-carboxylate + L-aspartate + ATP = (2S)-2-[5-amino-1-(5-phospho-beta-D-ribosyl)imidazole-4-carboxamido]succinate + ADP + phosphate + 2 H(+). The protein operates within purine metabolism; IMP biosynthesis via de novo pathway; 5-amino-1-(5-phospho-D-ribosyl)imidazole-4-carboxamide from 5-amino-1-(5-phospho-D-ribosyl)imidazole-4-carboxylate: step 1/2. The sequence is that of Phosphoribosylaminoimidazole-succinocarboxamide synthase from Pseudomonas putida (strain GB-1).